The sequence spans 538 residues: Coiled-coil domain-containing protein 8 (538 aa).

Residues 58 to 128 are disordered; that stretch reads IMEKSTPHPP…QGPRRGKKVR (71 aa). A compositionally biased stretch (basic residues) spans 119 to 128; the sequence is QGPRRGKKVR. Residues serine 142, serine 146, and serine 261 each carry the phosphoserine modification. Residues 213–473 form a disordered region; the sequence is WAPRAGPGVG…GTAPGARARK (261 aa). Positions 301-313 are enriched in basic and acidic residues; sequence DSQREEAIADQRE. The segment covering 321 to 332 has biased composition (low complexity); that stretch reads AGAPADQGAEAA. The stretch at 349 to 366 forms a coiled coil; sequence AEEGAEAADNQREEAADN. Composition is skewed to basic and acidic residues over residues 357-373, 381-392, and 405-419; these read DNQREEAADNQRAEAPA, DNHREEAADNQR, and DNQREEAVHDQRERA. Composition is skewed to low complexity over residues 428–438 and 458–469; these read QRAQARAGQRA and AAQGTTGTAPGA. Positions 500-506 match the PxLPxI/L motif; mediates interaction with ANKRA2 motif; the sequence is PRLPTLP. Residues 514 to 535 are a coiled coil; it reads EARNLRVLRAEARAEAEQGEQE.

As to quaternary structure, component of the 3M complex, composed of core components CUL7, CCDC8 and OBSL1. Interacts (via PxLPxI/L motif) with ANKRA2 (via ankyrin repeats); may link the 3M complex to histone deacetylases including HDAC4 and HDAC5. Widely expressed with low levels in spleen, skeletal muscle, small intestine, kidney and liver.

The protein resides in the cytoplasm. It localises to the cytoskeleton. It is found in the microtubule organizing center. The protein localises to the centrosome. Its function is as follows. Core component of the 3M complex, a complex required to regulate microtubule dynamics and genome integrity. It is unclear how the 3M complex regulates microtubules, it could act by controlling the level of a microtubule stabilizer. Required for localization of CUL7 to the centrosome. The protein is Coiled-coil domain-containing protein 8 (CCDC8) of Homo sapiens (Human).